Here is a 122-residue protein sequence, read N- to C-terminus: Ribonuclease P protein component (122 aa).

This sequence belongs to the RnpA family. Consists of a catalytic RNA component (M1 or rnpB) and a protein subunit.

It catalyses the reaction Endonucleolytic cleavage of RNA, removing 5'-extranucleotides from tRNA precursor.. In terms of biological role, RNaseP catalyzes the removal of the 5'-leader sequence from pre-tRNA to produce the mature 5'-terminus. It can also cleave other RNA substrates such as 4.5S RNA. The protein component plays an auxiliary but essential role in vivo by binding to the 5'-leader sequence and broadening the substrate specificity of the ribozyme. This Roseiflexus sp. (strain RS-1) protein is Ribonuclease P protein component.